A 352-amino-acid polypeptide reads, in one-letter code: DNA-directed RNA polymerase subunit alpha (352 aa).

The tract at residues 1 to 226 (MLISQRPTLT…ELFGLARELN (226 aa)) is alpha N-terminal domain (alpha-NTD). The alpha C-terminal domain (alpha-CTD) stretch occupies residues 243-352 (HIASFGLPIE…EQDYAETEQL (110 aa)). The interval 324 to 352 (DASTGTWSDSGTFSDNDGGEQDYAETEQL) is disordered. Residues 326-338 (STGTWSDSGTFSD) are compositionally biased toward polar residues. The segment covering 340–352 (DGGEQDYAETEQL) has biased composition (acidic residues).

It belongs to the RNA polymerase alpha chain family. Homodimer. The RNAP catalytic core consists of 2 alpha, 1 beta, 1 beta' and 1 omega subunit. When a sigma factor is associated with the core the holoenzyme is formed, which can initiate transcription.

It catalyses the reaction RNA(n) + a ribonucleoside 5'-triphosphate = RNA(n+1) + diphosphate. Its function is as follows. DNA-dependent RNA polymerase catalyzes the transcription of DNA into RNA using the four ribonucleoside triphosphates as substrates. The polypeptide is DNA-directed RNA polymerase subunit alpha (Nocardia farcinica (strain IFM 10152)).